Here is a 349-residue protein sequence, read N- to C-terminus: MQIEKKDIRALSKDQLRDFFVANNDKAFRGNQVYEWLWSKGAHSFEDMTNVAKTTRSMLEENFVINHIKVDTMQRSNDGTVKNAVRLHDGLVVESVLIPTETRTTACVSSQVGCSLDCNFCATARLKRMRNLEPGEIYDQIMAIDKESRLYHNHPLSNIVFMGMGEPLMNYNNVIKAIDMVTSEEGLGMSPKRITLSTSGIPKMIKKMADDDVKFRLAVSLHSAIDETRAKIMPFSKNFPLKDLREALEYWYRKTKSKVSYEYVVWKGINDDKASVDALVKFCKYVPCKVNLIEYNPIDDGEFQQASEESILAYIKALENIGVVVKVRRSRGKDIDAACGQLANKEAEV.

The Proton acceptor role is filled by glutamate 94. Positions threonine 100 to aspartate 334 constitute a Radical SAM core domain. Cysteines 107 and 339 form a disulfide. 3 residues coordinate [4Fe-4S] cluster: cysteine 114, cysteine 118, and cysteine 121. Residues glycine 165 to glutamate 166, serine 197, serine 220 to histidine 222, and asparagine 296 contribute to the S-adenosyl-L-methionine site. The active-site S-methylcysteine intermediate is the cysteine 339.

It belongs to the radical SAM superfamily. RlmN family. [4Fe-4S] cluster is required as a cofactor.

It is found in the cytoplasm. It catalyses the reaction adenosine(2503) in 23S rRNA + 2 reduced [2Fe-2S]-[ferredoxin] + 2 S-adenosyl-L-methionine = 2-methyladenosine(2503) in 23S rRNA + 5'-deoxyadenosine + L-methionine + 2 oxidized [2Fe-2S]-[ferredoxin] + S-adenosyl-L-homocysteine. The enzyme catalyses adenosine(37) in tRNA + 2 reduced [2Fe-2S]-[ferredoxin] + 2 S-adenosyl-L-methionine = 2-methyladenosine(37) in tRNA + 5'-deoxyadenosine + L-methionine + 2 oxidized [2Fe-2S]-[ferredoxin] + S-adenosyl-L-homocysteine. Specifically methylates position 2 of adenine 2503 in 23S rRNA and position 2 of adenine 37 in tRNAs. This chain is Probable dual-specificity RNA methyltransferase RlmN, found in Flavobacterium johnsoniae (strain ATCC 17061 / DSM 2064 / JCM 8514 / BCRC 14874 / CCUG 350202 / NBRC 14942 / NCIMB 11054 / UW101) (Cytophaga johnsonae).